A 630-amino-acid chain; its full sequence is DELLA protein DWARF8 (630 aa).

The tract at residues 1–35 (MKREYQDAGGSGGDMGSSKDKMMAAAAGAGEQEEE) is disordered. Positions 38–42 (DELLA) match the DELLA motif motif. Residues 161–222 (PIPSPVAAPS…AAPPATQASA (62 aa)) are disordered. Composition is skewed to low complexity over residues 165–176 (PVAAPSADPSTD) and 191–222 (TSSSSSSSSSMDGGRTRSSVVEAAPPATQASA). A GRAS domain is found at 234 to 623 (VDTQEAGIRL…RPLIATSAWR (390 aa)). The segment at 241 to 297 (IRLVHALLACAEAVQQENFSAAEALVKQIPMLASSQGGAMRKVAAYFGEALARRVYR) is leucine repeat I (LRI). Residues 248–252 (LACAE) carry the LxCxE motif motif. The segment at 316–381 (HAHFYESCPY…GGPPSFRLTG (66 aa)) is VHIID. The short motif at 347 to 351 (VHVVD) is the VHIID element. The interval 395–427 (QVGWKLAQFAHTIRVDFQYRGLVAATLADLEPF) is leucine repeat II (LRII). The PFYRE stretch occupies residues 443 to 544 (IAVNSVFELH…EVYLGRQICN (102 aa)). An LXXLL motif motif is present at residues 451-455 (LHRLL). The SAW stretch occupies residues 547 to 623 (ACEGAERTER…RPLIATSAWR (77 aa)).

Belongs to the GRAS family. DELLA subfamily. Phosphorylated. In terms of processing, ubiquitinated. Upon GA application it is ubiquitinated, leading to its subsequent degradation.

It is found in the nucleus. In terms of biological role, probable transcriptional regulator that acts as a repressor of the gibberellin (GA) signaling pathway. Probably acts by participating in large multiprotein complexes that repress transcription of GA-inducible genes. Upon GA application, it is degraded by the proteasome, allowing the GA signaling pathway. This Zea mays (Maize) protein is DELLA protein DWARF8 (D8).